Consider the following 253-residue polypeptide: Ribosomal RNA small subunit methyltransferase G (253 aa).

S-adenosyl-L-methionine contacts are provided by residues Gly-84, Leu-89, 136–137 (IE), and Arg-155.

Belongs to the methyltransferase superfamily. RNA methyltransferase RsmG family.

It localises to the cytoplasm. Specifically methylates the N7 position of a guanine in 16S rRNA. The polypeptide is Ribosomal RNA small subunit methyltransferase G (Prochlorococcus marinus (strain SARG / CCMP1375 / SS120)).